The chain runs to 103 residues: Transcriptional regulator WhiB7 (103 aa).

Residues C17, C49, C52, and C58 each coordinate [4Fe-4S] cluster. A 4Fe-4S Wbl-type domain is found at P25–I82. Residues I82–A103 are disordered.

This sequence belongs to the WhiB family. [4Fe-4S] cluster serves as cofactor. Post-translationally, the Fe-S cluster can be nitrosylated by nitric oxide (NO). Upon Fe-S cluster removal intramolecular disulfide bonds are formed.

The protein localises to the cytoplasm. Functionally, acts as a transcriptional regulator. Probably redox-responsive. The apo- but not holo-form probably binds DNA. Participates in maintaining a reduced cytoplasmic (MSH/MSSM) environment under normal growth conditions and directly or indirectly controls the concentration of mycothiol (MSH + MSSM). The chain is Transcriptional regulator WhiB7 (whiB7) from Mycolicibacterium smegmatis (strain ATCC 700084 / mc(2)155) (Mycobacterium smegmatis).